The sequence spans 551 residues: Probable NADH-ubiquinone oxidoreductase C947.15c, mitochondrial (551 aa).

Residues 1–35 constitute a mitochondrion transit peptide; sequence MSVSKARLQSVVRLSRTVPYSKTMVRSFHVSCAVK. 92-122 is an FAD binding site; that stretch reads NIVVLGSGWGAVAAIKNLDPSLYNITLVSPR. 255 to 291 contributes to the NAD(+) binding site; sequence LHITVVGGGPTGMEFAAEMQDFIDNDVKDMFPELQKD.

Belongs to the NADH dehydrogenase family.

It localises to the mitochondrion. It catalyses the reaction a quinone + NADH + H(+) = a quinol + NAD(+). The catalysed reaction is a ubiquinone + NADH + H(+) = a ubiquinol + NAD(+). Functionally, catalyzes the oxidation of NADH. In Schizosaccharomyces pombe (strain 972 / ATCC 24843) (Fission yeast), this protein is Probable NADH-ubiquinone oxidoreductase C947.15c, mitochondrial.